The primary structure comprises 431 residues: Trigger factor (431 aa).

In terms of domain architecture, PPIase FKBP-type spans 160–245; it reads EDRVTIDFSG…LKKVEVMVLP (86 aa).

This sequence belongs to the FKBP-type PPIase family. Tig subfamily.

It is found in the cytoplasm. It carries out the reaction [protein]-peptidylproline (omega=180) = [protein]-peptidylproline (omega=0). Functionally, involved in protein export. Acts as a chaperone by maintaining the newly synthesized protein in an open conformation. Functions as a peptidyl-prolyl cis-trans isomerase. This Actinobacillus succinogenes (strain ATCC 55618 / DSM 22257 / CCUG 43843 / 130Z) protein is Trigger factor.